The sequence spans 512 residues: Glycerol kinase (512 aa).

Thr-13 contributes to the ADP binding site. 3 residues coordinate ATP: Thr-13, Thr-14, and Ser-15. Residue Thr-13 coordinates sn-glycerol 3-phosphate. An ADP-binding site is contributed by Arg-17. Positions 83, 84, 135, and 252 each coordinate sn-glycerol 3-phosphate. Residues Arg-83, Glu-84, Tyr-135, Asp-252, and Gln-253 each contribute to the glycerol site. Residues Thr-274 and Gly-318 each coordinate ADP. ATP is bound by residues Thr-274, Gly-318, Gln-322, and Gly-419. The ADP site is built by Gly-419 and Asn-423.

This sequence belongs to the FGGY kinase family.

The enzyme catalyses glycerol + ATP = sn-glycerol 3-phosphate + ADP + H(+). It functions in the pathway polyol metabolism; glycerol degradation via glycerol kinase pathway; sn-glycerol 3-phosphate from glycerol: step 1/1. With respect to regulation, inhibited by fructose 1,6-bisphosphate (FBP). Functionally, key enzyme in the regulation of glycerol uptake and metabolism. Catalyzes the phosphorylation of glycerol to yield sn-glycerol 3-phosphate. The polypeptide is Glycerol kinase (Corynebacterium kroppenstedtii (strain DSM 44385 / JCM 11950 / CIP 105744 / CCUG 35717)).